The chain runs to 73 residues: Translation initiation factor IF-1 (73 aa).

The S1-like domain occupies 1–73; it reads MPKKDGVIEI…SRGRIVYRYK (73 aa).

The protein belongs to the IF-1 family. As to quaternary structure, component of the 30S ribosomal translation pre-initiation complex which assembles on the 30S ribosome in the order IF-2 and IF-3, IF-1 and N-formylmethionyl-tRNA(fMet); mRNA recruitment can occur at any time during PIC assembly.

The protein resides in the cytoplasm. In terms of biological role, one of the essential components for the initiation of protein synthesis. Stabilizes the binding of IF-2 and IF-3 on the 30S subunit to which N-formylmethionyl-tRNA(fMet) subsequently binds. Helps modulate mRNA selection, yielding the 30S pre-initiation complex (PIC). Upon addition of the 50S ribosomal subunit IF-1, IF-2 and IF-3 are released leaving the mature 70S translation initiation complex. The protein is Translation initiation factor IF-1 of Kineococcus radiotolerans (strain ATCC BAA-149 / DSM 14245 / SRS30216).